A 118-amino-acid polypeptide reads, in one-letter code: Large ribosomal subunit protein uL18 (118 aa).

This sequence belongs to the universal ribosomal protein uL18 family. As to quaternary structure, part of the 50S ribosomal subunit; part of the 5S rRNA/L5/L18/L25 subcomplex. Contacts the 5S and 23S rRNAs.

In terms of biological role, this is one of the proteins that bind and probably mediate the attachment of the 5S RNA into the large ribosomal subunit, where it forms part of the central protuberance. This Caulobacter sp. (strain K31) protein is Large ribosomal subunit protein uL18.